Here is a 262-residue protein sequence, read N- to C-terminus: Short-chain Z-isoprenyl diphosphate synthase (262 aa).

D40 is a catalytic residue. D40 lines the Mg(2+) pocket. Residues G41–R44, W45, and S86–E88 contribute to the substrate site. N89 serves as the catalytic Proton acceptor. Substrate is bound by residues R92, R211, and R217–S219. A Mg(2+)-binding site is contributed by E230.

It belongs to the UPP synthase family. Z-FPP synthase subfamily. Mg(2+) is required as a cofactor.

The catalysed reaction is isopentenyl diphosphate + (2E)-geranyl diphosphate = (2Z,6E)-farnesyl diphosphate + diphosphate. It functions in the pathway phospholipid metabolism; decaprenyl phosphate biosynthesis. Functionally, generates Z-farnesyl diphosphate (Z-FPP) from isopentenyl pyrophosphate (IPP). Z-FPP is the precursor of decaprenyl diphosphate, which has a central role in the biosynthesis of the mycobacterial cell wall. The chain is Short-chain Z-isoprenyl diphosphate synthase from Mycobacterium bovis (strain ATCC BAA-935 / AF2122/97).